Consider the following 934-residue polypeptide: Serine/threonine-protein kinase PknD (934 aa).

In terms of domain architecture, Protein kinase spans 4–296 (YELIRLIGKG…ELRQALQPYL (293 aa)). Residues 10 to 18 (IGKGGMGEV) and lysine 33 contribute to the ATP site. Aspartate 138 serves as the catalytic Proton acceptor.

It belongs to the protein kinase superfamily. Ser/Thr protein kinase family. As to quaternary structure, interacts with Pkn1. Post-translationally, autophosphorylated on serine and threonine residues.

The catalysed reaction is L-seryl-[protein] + ATP = O-phospho-L-seryl-[protein] + ADP + H(+). The enzyme catalyses L-threonyl-[protein] + ATP = O-phospho-L-threonyl-[protein] + ADP + H(+). Its function is as follows. Together with the serine/threonine kinase Pkn1, may play a role in the specific interactions with host proteins during intracellular growth. Autophosphorylates and also phosphorylates Pkn1. In Chlamydia trachomatis serovar D (strain ATCC VR-885 / DSM 19411 / UW-3/Cx), this protein is Serine/threonine-protein kinase PknD.